Here is a 261-residue protein sequence, read N- to C-terminus: Flagellar L-ring protein (261 aa).

An N-terminal signal peptide occupies residues 1-15; that stretch reads MKRLLCLLLLTTLTG. The N-palmitoyl cysteine moiety is linked to residue C16. A lipid anchor (S-diacylglycerol cysteine) is attached at C16. The segment covering 121–133 has biased composition (basic and acidic residues); that stretch reads KSADAELSKKNDS. The disordered stretch occupies residues 121 to 140; that stretch reads KSADAELSKKNDSSMDPLQV.

It belongs to the FlgH family. The basal body constitutes a major portion of the flagellar organelle and consists of four rings (L,P,S, and M) mounted on a central rod.

It is found in the cell outer membrane. The protein localises to the bacterial flagellum basal body. Its function is as follows. Assembles around the rod to form the L-ring and probably protects the motor/basal body from shearing forces during rotation. The sequence is that of Flagellar L-ring protein from Aliivibrio salmonicida (strain LFI1238) (Vibrio salmonicida (strain LFI1238)).